We begin with the raw amino-acid sequence, 83 residues long: Apolipoprotein C-I (83 aa).

The first 26 residues, 1–26, serve as a signal peptide directing secretion; the sequence is MRLILSLPVLAVVLAMVLEGPAPAQA.

Belongs to the apolipoprotein C1 family.

It localises to the secreted. Inhibitor of lipoprotein binding to the low density lipoprotein (LDL) receptor, LDL receptor-related protein, and very low density lipoprotein (VLDL) receptor. Associates with high density lipoproteins (HDL) and the triacylglycerol-rich lipoproteins in the plasma and makes up about 10% of the protein of the VLDL and 2% of that of HDL. Appears to interfere directly with fatty acid uptake and is also the major plasma inhibitor of cholesteryl ester transfer protein (CETP). Binds free fatty acids and reduces their intracellular esterification. Modulates the interaction of APOE with beta-migrating VLDL and inhibits binding of beta-VLDL to the LDL receptor-related protein. In Eonycteris spelaea (Lesser dawn bat), this protein is Apolipoprotein C-I (APOC1).